The chain runs to 142 residues: Putative pre-16S rRNA nuclease (142 aa).

Belongs to the YqgF nuclease family.

It localises to the cytoplasm. Functionally, could be a nuclease involved in processing of the 5'-end of pre-16S rRNA. The chain is Putative pre-16S rRNA nuclease from Prosthecochloris aestuarii (strain DSM 271 / SK 413).